The chain runs to 332 residues: Glycerol-3-phosphate dehydrogenase [NAD(P)+] (332 aa).

Trp-13, Lys-34, and Lys-108 together coordinate NADPH. The sn-glycerol 3-phosphate site is built by Lys-108, Gly-136, and Ser-138. Ala-140 contacts NADPH. Sn-glycerol 3-phosphate contacts are provided by Lys-191, Asp-244, Ser-254, Arg-255, and Asn-256. Lys-191 acts as the Proton acceptor in catalysis. Residue Arg-255 coordinates NADPH. 2 residues coordinate NADPH: Val-279 and Glu-281.

The protein belongs to the NAD-dependent glycerol-3-phosphate dehydrogenase family.

It localises to the cytoplasm. The enzyme catalyses sn-glycerol 3-phosphate + NAD(+) = dihydroxyacetone phosphate + NADH + H(+). The catalysed reaction is sn-glycerol 3-phosphate + NADP(+) = dihydroxyacetone phosphate + NADPH + H(+). It participates in membrane lipid metabolism; glycerophospholipid metabolism. Functionally, catalyzes the reduction of the glycolytic intermediate dihydroxyacetone phosphate (DHAP) to sn-glycerol 3-phosphate (G3P), the key precursor for phospholipid synthesis. The sequence is that of Glycerol-3-phosphate dehydrogenase [NAD(P)+] from Francisella tularensis subsp. tularensis (strain FSC 198).